The following is a 565-amino-acid chain: Probable beta-glucosidase btgE (565 aa).

The signal sequence occupies residues 1–18 (MRGAILATAAALAGTAMA). The segment at 246–304 (TGQDEPTSAPAAPSTTAVPATTTAAPETTTAAPDTTTAVPSTSSAAPSSSSTAPASTGA) is disordered. A compositionally biased stretch (low complexity) spans 251 to 304 (PTSAPAAPSTTAVPATTTAAPETTTAAPDTTTAVPSTSSAAPSSSSTAPASTGA). Glutamate 405 functions as the Proton donor in the catalytic mechanism. Glutamate 501 functions as the Nucleophile in the catalytic mechanism.

This sequence belongs to the glycosyl hydrolase 17 family.

The protein resides in the secreted. It localises to the cell wall. The enzyme catalyses Hydrolysis of terminal, non-reducing beta-D-glucosyl residues with release of beta-D-glucose.. Its pathway is glycan metabolism; cellulose degradation. Its function is as follows. Beta-glucosidases are one of a number of cellulolytic enzymes involved in the degradation of cellulosic biomass. Catalyzes the last step releasing glucose from the inhibitory cellobiose. In Aspergillus fumigatus (strain CBS 144.89 / FGSC A1163 / CEA10) (Neosartorya fumigata), this protein is Probable beta-glucosidase btgE (btgE).